The sequence spans 288 residues: MEPPDQCSQYMTSLLSPAVDDEKELQDMNAMVLSLTEEVKEEEEDAQPEPEQGTAAGEKLKSAGAQGGEEKDGGGEEKDGGGAGVPGHLWEGNLEGTSGSDGNVEDSDQSEKEPGQQYSRPQGAVGGLEPGNAQQPNVHAFTPLQLQELECIFQREQFPSEFLRRRLARSMNVTELAVQIWFENRRAKWRRHQRALMARNMLPFMAVGQPVMVTAAEAITAPLFISGMRDDYFWDHSHSSSLCFPMPPFPPPSLPLPLMLLPPMPPAGQAEFGPFPFVIVPSFTFPNV.

A disordered region spans residues 16-136; the sequence is SPAVDDEKEL…GLEPGNAQQP (121 aa). Residues 39–48 are compositionally biased toward acidic residues; the sequence is VKEEEEDAQP. A compositionally biased stretch (basic and acidic residues) spans 68–80; it reads GEEKDGGGEEKDG. The homeobox DNA-binding region spans 134 to 193; that stretch reads QQPNVHAFTPLQLQELECIFQREQFPSEFLRRRLARSMNVTELAVQIWFENRRAKWRRHQ. A Nuclear localization signal motif is present at residues 186–195; it reads RAKWRRHQRA.

The protein belongs to the paired-like homeobox family. PEPP subfamily. In terms of tissue distribution, expressed in testis, mainly expressed in germ cells, but also detected in somatic cells such as Sertoli cells, Leydig cells and peritubular cells.

The protein localises to the nucleus. Transcription factor maybe involved in reproductive processes. Modulates expression of target genes encoding proteins involved in processes relevant to spermatogenesis. The protein is Rhox homeobox family member 2B of Homo sapiens (Human).